The following is a 261-amino-acid chain: Endomucin (261 aa).

A signal peptide spans M1–S18. 4 N-linked (GlcNAc...) asparagine glycosylation sites follow: N19, N28, N98, and N104. Topologically, residues N19–S190 are extracellular. 2 stretches are compositionally biased toward polar residues: residues T118–T134 and A146–I171. Residues T118–A183 are disordered. Residues N164 and N178 are each glycosylated (N-linked (GlcNAc...) asparagine). The helical transmembrane segment at I191–G211 threads the bilayer. The Cytoplasmic portion of the chain corresponds to L212–N261. S237 carries the post-translational modification Phosphoserine.

Post-translationally, highly O-glycosylated. Sialic acid-rich glycoprotein. In terms of tissue distribution, expressed in heart, kidney and lung.

Its subcellular location is the cell membrane. The protein resides in the membrane. It is found in the secreted. Endothelial sialomucin, also called endomucin or mucin-like sialoglycoprotein, which interferes with the assembly of focal adhesion complexes and inhibits interaction between cells and the extracellular matrix. This is Endomucin (EMCN) from Homo sapiens (Human).